Reading from the N-terminus, the 184-residue chain is Trichothecene 15-O-acetyltransferase SAT16 (184 aa).

Histidine 154 provides a ligand contact to substrate.

Belongs to the trichothecene O-acetyltransferase family.

It functions in the pathway mycotoxin biosynthesis. In terms of biological role, trichothecene 15-O-acetyltransferase; part of the satratoxin SC2 cluster involved in the biosynthesis of satratoxins, trichothecene mycotoxins that are associated with human food poisonings. Satratoxins are suggested to be made by products of multiple gene clusters (SC1, SC2 and SC3) that encode 21 proteins in all, including polyketide synthases, acetyltransferases, and other enzymes expected to modify the trichothecene skeleton. SC1 encodes 10 proteins, SAT1 to SAT10. The largest are SAT8, which encodes a putative polyketide synthase (PKS) with a conventional non-reducing architecture, and SAT10, a putative protein containing four ankyrin repeats and thus may be involved in protein scaffolding. The putative short-chain reductase SAT3 may assist the PKS in some capacity. SAT6 contains a secretory lipase domain and acts probably as a trichothecene esterase. SAT5 encodes a putative acetyltransferase, and so, with SAT6, may affect endogenous protection from toxicity. The probable transcription factor SAT9 may regulate the expression of the SC1 cluster. SC2 encodes proteins SAT11 to SAT16, the largest of which encodes the putative reducing PKS SAT13. SAT11 is a cytochrome P450 monooxygenase, while SAT14 and SAT16 are probable acetyltransferases. The SC2 cluster may be regulated by the transcription factor SAT15. SC3 is a small cluster that encodes 5 proteins, SAT17 to SAT21. SAT21 is a putative MFS-type transporter which may have a role in exporting secondary metabolites. The four other proteins putatively encoded in SC3 include the taurine hydroxylase-like protein SAT17, the O-methyltransferase SAT18, the acetyltransferase SAT19, and the Cys6-type zinc finger SAT20, the latter being probably involved in regulation of SC3 expression. This is Trichothecene 15-O-acetyltransferase SAT16 from Stachybotrys chartarum (strain CBS 109288 / IBT 7711) (Toxic black mold).